Here is a 318-residue protein sequence, read N- to C-terminus: Biotin synthase (318 aa).

The Radical SAM core domain maps to Leu-44–Arg-273. The [4Fe-4S] cluster site is built by Cys-62, Cys-66, and Cys-69. Residues Ser-106, Cys-138, Cys-198, and Arg-268 each coordinate [2Fe-2S] cluster.

Belongs to the radical SAM superfamily. Biotin synthase family. As to quaternary structure, homodimer. [4Fe-4S] cluster is required as a cofactor. It depends on [2Fe-2S] cluster as a cofactor.

It carries out the reaction (4R,5S)-dethiobiotin + (sulfur carrier)-SH + 2 reduced [2Fe-2S]-[ferredoxin] + 2 S-adenosyl-L-methionine = (sulfur carrier)-H + biotin + 2 5'-deoxyadenosine + 2 L-methionine + 2 oxidized [2Fe-2S]-[ferredoxin]. The protein operates within cofactor biosynthesis; biotin biosynthesis; biotin from 7,8-diaminononanoate: step 2/2. Catalyzes the conversion of dethiobiotin (DTB) to biotin by the insertion of a sulfur atom into dethiobiotin via a radical-based mechanism. In Clostridium botulinum (strain Alaska E43 / Type E3), this protein is Biotin synthase.